The following is a 437-amino-acid chain: Mitochondrial distribution and morphology protein 12 (437 aa).

The 437-residue stretch at 1-437 (MSIDINWRTA…VYPSFWTFLI (437 aa)) folds into the SMP-LTD domain. The span at 73–85 (DDDADTSDVSEDL) shows a compositional bias: acidic residues. Disordered stretches follow at residues 73–101 (DDDA…SELN), 187–274 (SDSG…PPRM), and 354–384 (SEQQ…RQGG). Residues 91 to 101 (SQWDRTHSELN) show a composition bias toward basic and acidic residues. Composition is skewed to polar residues over residues 215 to 240 (DTSN…NNLN) and 371 to 381 (ADSSAHTSQKR).

It belongs to the MDM12 family. In terms of assembly, component of the ER-mitochondria encounter structure (ERMES) or MDM complex, composed of mmm1, mdm10, mdm12 and mdm34. A mmm1 homodimer associates with one molecule of mdm12 on each side in a pairwise head-to-tail manner, and the SMP-LTD domains of mmm1 and mdm12 generate a continuous hydrophobic tunnel for phospholipid trafficking.

The protein localises to the mitochondrion outer membrane. The protein resides in the endoplasmic reticulum membrane. Functionally, component of the ERMES/MDM complex, which serves as a molecular tether to connect the endoplasmic reticulum (ER) and mitochondria. Components of this complex are involved in the control of mitochondrial shape and protein biogenesis, and function in nonvesicular lipid trafficking between the ER and mitochondria. Mdm12 is required for the interaction of the ER-resident membrane protein mmm1 and the outer mitochondrial membrane-resident beta-barrel protein mdm10. The mdm12-mmm1 subcomplex functions in the major beta-barrel assembly pathway that is responsible for biogenesis of all mitochondrial outer membrane beta-barrel proteins, and acts in a late step after the SAM complex. The mdm10-mdm12-mmm1 subcomplex further acts in the TOM40-specific pathway after the action of the mdm12-mmm1 complex. Essential for establishing and maintaining the structure of mitochondria and maintenance of mtDNA nucleoids. The sequence is that of Mitochondrial distribution and morphology protein 12 from Aspergillus clavatus (strain ATCC 1007 / CBS 513.65 / DSM 816 / NCTC 3887 / NRRL 1 / QM 1276 / 107).